Consider the following 237-residue polypeptide: MILQVQPAKLIKRYKRFLADIELNCGEETTIHCANTGAMKGCAEPDDTVWYTTSTNTKRKYPFSWEITQSQDDHFICVNTLRANQLVEEALHLDLIKELSGFNELKREVKYGNENSRVDFLATYNNAPDTYIEVKSVTLLESGHGYFPDAVTTRGQKHLRELMDMVAQGHKAVLLFAVLHSGINDISAASHVDPIYAKLLKEARLAGVEIIAYKAGFSLQLGELDVKLVEKIPFIER.

It belongs to the SfsA family.

The protein is Sugar fermentation stimulation protein homolog of Colwellia psychrerythraea (strain 34H / ATCC BAA-681) (Vibrio psychroerythus).